The chain runs to 548 residues: Probable aquaglyceroporin-4 (548 aa).

Polar residues predominate over residues 1-22 (MAGTQDQSQDYFSKPTTPSTPG). Disordered stretches follow at residues 1-63 (MAGT…LPST), 76-101 (SRGFSRVSSEGTASRPTAPQHSSHFH), and 158-270 (KEET…ESGD). Residues 1–290 (MAGTQDQSQD…ARLRARHPEP (290 aa)) are Cytoplasmic-facing. The span at 38-48 (PDRESGTERAK) shows a compositional bias: basic and acidic residues. Composition is skewed to polar residues over residues 77-97 (RGFSRVSSEGTASRPTAPQHS) and 171-200 (SRTTSGQPYRVETQSSLPSRDIQRQQSRTT). Basic and acidic residues predominate over residues 249-265 (PDFKVDGEPLGHQEKPC). A helical membrane pass occupies residues 291–311 (LAEFLATAVAIFLGLTGTLSV). A glycan (N-linked (GlcNAc...) asparagine) is linked at Asn-312. The Extracellular portion of the chain corresponds to 312–327 (NLSATQSQPYGTYETS). Residues 328–348 (CWAWGFAWMFGIYLGGGVSGA) traverse the membrane as a helical segment. Topologically, residues 349-369 (HMNPAISVSLSIFRGFPWRQC) are cytoplasmic. The NPA 1 motif lies at 351 to 353 (NPA). Residues 370–390 (VIYVFVQFIASIVAGALAYAM) traverse the membrane as a helical segment. The Extracellular portion of the chain corresponds to 391-420 (YADSINHVDPDMTKMSMTFFSTPREWVTLK). The chain crosses the membrane as a helical span at residues 421–441 (SAFFNQVVGSAIMMIAVFALG). Over 442-448 (DDQNNPP) the chain is Cytoplasmic. The chain crosses the membrane as a helical span at residues 449–469 (GAGMHALVLGFLVTTLKFTLG). The Extracellular portion of the chain corresponds to 470–508 (YNIGSALNPASDFGPRVIAYAVGFRGDNVFHSGWWFYGP). Residues 477–479 (NPA) carry the NPA 2 motif. The helical transmembrane segment at 509–529 (WAATLIGSLLGCTLYDGFVFV) threads the bilayer. The Cytoplasmic segment spans residues 530–548 (GSESPVNFRVDKRVKKLFN).

The protein belongs to the MIP/aquaporin (TC 1.A.8) family.

It is found in the membrane. The enzyme catalyses H2O(in) = H2O(out). It catalyses the reaction glycerol(in) = glycerol(out). Its function is as follows. Probable water/glycerol channel that may have redundant functions with FgAQP2. This chain is Probable aquaglyceroporin-4, found in Gibberella zeae (strain ATCC MYA-4620 / CBS 123657 / FGSC 9075 / NRRL 31084 / PH-1) (Wheat head blight fungus).